The primary structure comprises 357 residues: Holliday junction branch migration complex subunit RuvB (357 aa).

The segment at tryptophan 3–tyrosine 193 is large ATPase domain (RuvB-L). ATP contacts are provided by residues leucine 32, arginine 33, glycine 74, lysine 77, threonine 78, threonine 79, glutamate 140 to phenylalanine 142, arginine 183, tyrosine 193, and arginine 230. Threonine 78 is a binding site for Mg(2+). The tract at residues glycine 194–glutamate 264 is small ATPAse domain (RuvB-S). Residues alanine 267 to alanine 357 are head domain (RuvB-H). DNA is bound by residues arginine 303, arginine 322, and arginine 327. Residues leucine 337–alanine 357 form a disordered region.

This sequence belongs to the RuvB family. As to quaternary structure, homohexamer. Forms an RuvA(8)-RuvB(12)-Holliday junction (HJ) complex. HJ DNA is sandwiched between 2 RuvA tetramers; dsDNA enters through RuvA and exits via RuvB. An RuvB hexamer assembles on each DNA strand where it exits the tetramer. Each RuvB hexamer is contacted by two RuvA subunits (via domain III) on 2 adjacent RuvB subunits; this complex drives branch migration. In the full resolvosome a probable DNA-RuvA(4)-RuvB(12)-RuvC(2) complex forms which resolves the HJ.

The protein localises to the cytoplasm. It carries out the reaction ATP + H2O = ADP + phosphate + H(+). In terms of biological role, the RuvA-RuvB-RuvC complex processes Holliday junction (HJ) DNA during genetic recombination and DNA repair, while the RuvA-RuvB complex plays an important role in the rescue of blocked DNA replication forks via replication fork reversal (RFR). RuvA specifically binds to HJ cruciform DNA, conferring on it an open structure. The RuvB hexamer acts as an ATP-dependent pump, pulling dsDNA into and through the RuvAB complex. RuvB forms 2 homohexamers on either side of HJ DNA bound by 1 or 2 RuvA tetramers; 4 subunits per hexamer contact DNA at a time. Coordinated motions by a converter formed by DNA-disengaged RuvB subunits stimulates ATP hydrolysis and nucleotide exchange. Immobilization of the converter enables RuvB to convert the ATP-contained energy into a lever motion, pulling 2 nucleotides of DNA out of the RuvA tetramer per ATP hydrolyzed, thus driving DNA branch migration. The RuvB motors rotate together with the DNA substrate, which together with the progressing nucleotide cycle form the mechanistic basis for DNA recombination by continuous HJ branch migration. Branch migration allows RuvC to scan DNA until it finds its consensus sequence, where it cleaves and resolves cruciform DNA. This is Holliday junction branch migration complex subunit RuvB from Streptomyces coelicolor (strain ATCC BAA-471 / A3(2) / M145).